A 248-amino-acid chain; its full sequence is 4-hydroxy-tetrahydrodipicolinate reductase (248 aa).

Residues Gly-9–Val-14, Gly-77–Thr-79, and Ala-104–Phe-107 each bind NAD(+). His-134 functions as the Proton donor/acceptor in the catalytic mechanism. Residue His-135 participates in (S)-2,3,4,5-tetrahydrodipicolinate binding. The Proton donor role is filled by Lys-138. Residue Gly-144–Thr-145 coordinates (S)-2,3,4,5-tetrahydrodipicolinate.

Belongs to the DapB family.

It localises to the cytoplasm. It catalyses the reaction (S)-2,3,4,5-tetrahydrodipicolinate + NAD(+) + H2O = (2S,4S)-4-hydroxy-2,3,4,5-tetrahydrodipicolinate + NADH + H(+). The catalysed reaction is (S)-2,3,4,5-tetrahydrodipicolinate + NADP(+) + H2O = (2S,4S)-4-hydroxy-2,3,4,5-tetrahydrodipicolinate + NADPH + H(+). It functions in the pathway amino-acid biosynthesis; L-lysine biosynthesis via DAP pathway; (S)-tetrahydrodipicolinate from L-aspartate: step 4/4. Functionally, catalyzes the conversion of 4-hydroxy-tetrahydrodipicolinate (HTPA) to tetrahydrodipicolinate. This Corynebacterium efficiens (strain DSM 44549 / YS-314 / AJ 12310 / JCM 11189 / NBRC 100395) protein is 4-hydroxy-tetrahydrodipicolinate reductase.